The chain runs to 21 residues: Pseudogermin (21 aa).

Belongs to the germin family. Homotetramer.

Its subcellular location is the secreted. The protein resides in the extracellular space. The protein localises to the apoplast. It is found in the cell wall. Functionally, may subsume the role of germin at the low water potentials during embryogenesis. The protein is Pseudogermin of Triticum aestivum (Wheat).